Consider the following 58-residue polypeptide: Large ribosomal subunit protein uL30 (58 aa).

It belongs to the universal ribosomal protein uL30 family. In terms of assembly, part of the 50S ribosomal subunit.

This Zymomonas mobilis subsp. mobilis (strain ATCC 31821 / ZM4 / CP4) protein is Large ribosomal subunit protein uL30.